Consider the following 412-residue polypeptide: STAGA complex 65 subunit gamma (412 aa).

The disordered stretch occupies residues 81 to 107 (AQTQSQQQTEGVKAEESEPLPSCPGSP). Position 106 is a phosphoserine (S106). K269 is covalently cross-linked (Glycyl lysine isopeptide (Lys-Gly) (interchain with G-Cter in SUMO2)). 2 positions are modified to phosphoserine: S321 and S332. The disordered stretch occupies residues 364 to 412 (EEPMSGMSEAGLPQSPDDSDSSYGSHSTDSLMGSSPVFNQRCRKRMRKI). The segment covering 384 to 393 (SSYGSHSTDS) has biased composition (low complexity).

In terms of assembly, component of the STAGA transcription coactivator-HAT complex, at least composed of SUPT3H, SUPT7L, GCN5L2, TAF5L, TAF6L, TADA3L, TAD1L, TAF10, TAF12 and TAF9. In terms of processing, sumoylated.

Its subcellular location is the nucleus. The protein is STAGA complex 65 subunit gamma (Supt7l) of Mus musculus (Mouse).